The primary structure comprises 301 residues: Formylmethanofuran--tetrahydromethanopterin formyltransferase-like protein (301 aa).

It belongs to the FTR family.

The polypeptide is Formylmethanofuran--tetrahydromethanopterin formyltransferase-like protein (Archaeoglobus fulgidus (strain ATCC 49558 / DSM 4304 / JCM 9628 / NBRC 100126 / VC-16)).